Reading from the N-terminus, the 224-residue chain is Transmembrane emp24 domain-containing protein 7 (224 aa).

The N-terminal stretch at 1–34 is a signal peptide; sequence MPRPGSAQRWAAVAGRWGCRLLALLLLVPGPGGA. The Lumenal segment spans residues 35-187; it reads SEITFELPDN…RAEDLNTRVA (153 aa). Residues 46–128 enclose the GOLD domain; that stretch reads KQCFYEDIAQ…HKTVYFDFQV (83 aa). An N-linked (GlcNAc...) asparagine glycan is attached at Asn103. The helical transmembrane segment at 188-208 threads the bilayer; that stretch reads YWSVGEALILLVVSIGQVFLL. Residues 209 to 224 are Cytoplasmic-facing; sequence KSFFSDKRTTTTRVGS. Positions 211–212 match the COPII vesicle coat-binding motif; sequence FF. Positions 211 to 224 match the COPI vesicle coat-binding motif; that stretch reads FFSDKRTTTTRVGS.

Belongs to the EMP24/GP25L family. In terms of assembly, predominantly monomeric and to lesser extent homodimeric in endoplasmic reticulum, endoplasmic reticulum-Golgi intermediate compartment and cis-Golgi network. Oligomerizes with other members of the EMP24/GP25L family such as TMED2, TMED9 and TMED10. Interacts (via C-terminus) with COPG1; the interaction involves dimeric TMED7. N-linked glycosylated in complex form containing terminal sialic acid.

It is found in the endoplasmic reticulum membrane. The protein localises to the golgi apparatus. It localises to the cis-Golgi network membrane. Its subcellular location is the endoplasmic reticulum-Golgi intermediate compartment membrane. The protein resides in the cytoplasmic vesicle. It is found in the COPI-coated vesicle membrane. The protein localises to the COPII-coated vesicle membrane. Its function is as follows. Potential role in vesicular protein trafficking, mainly in the early secretory pathway. Appears to play a role in the biosynthesis of secreted cargo including processing and post-translational modifications. The chain is Transmembrane emp24 domain-containing protein 7 (TMED7) from Homo sapiens (Human).